A 100-amino-acid polypeptide reads, in one-letter code: UPF0473 protein Lm4b_01511 (100 aa).

This sequence belongs to the UPF0473 family.

The protein is UPF0473 protein Lm4b_01511 of Listeria monocytogenes serotype 4b (strain CLIP80459).